A 434-amino-acid polypeptide reads, in one-letter code: Methylenetetrahydrofolate--tRNA-(uracil-5-)-methyltransferase TrmFO (434 aa).

9–14 (GAGLAG) is an FAD binding site.

This sequence belongs to the MnmG family. TrmFO subfamily. FAD is required as a cofactor.

Its subcellular location is the cytoplasm. The catalysed reaction is uridine(54) in tRNA + (6R)-5,10-methylene-5,6,7,8-tetrahydrofolate + NADH + H(+) = 5-methyluridine(54) in tRNA + (6S)-5,6,7,8-tetrahydrofolate + NAD(+). It catalyses the reaction uridine(54) in tRNA + (6R)-5,10-methylene-5,6,7,8-tetrahydrofolate + NADPH + H(+) = 5-methyluridine(54) in tRNA + (6S)-5,6,7,8-tetrahydrofolate + NADP(+). Catalyzes the folate-dependent formation of 5-methyl-uridine at position 54 (M-5-U54) in all tRNAs. The protein is Methylenetetrahydrofolate--tRNA-(uracil-5-)-methyltransferase TrmFO of Bacillus licheniformis (strain ATCC 14580 / DSM 13 / JCM 2505 / CCUG 7422 / NBRC 12200 / NCIMB 9375 / NCTC 10341 / NRRL NRS-1264 / Gibson 46).